The following is a 348-amino-acid chain: 4-hydroxy-3-methylbut-2-enyl diphosphate reductase (348 aa).

Residue Cys-21 participates in [4Fe-4S] cluster binding. The (2E)-4-hydroxy-3-methylbut-2-enyl diphosphate site is built by His-50 and His-86. Residues His-50 and His-86 each coordinate dimethylallyl diphosphate. His-50 and His-86 together coordinate isopentenyl diphosphate. Cys-108 lines the [4Fe-4S] cluster pocket. His-136 serves as a coordination point for (2E)-4-hydroxy-3-methylbut-2-enyl diphosphate. His-136 provides a ligand contact to dimethylallyl diphosphate. Residue His-136 coordinates isopentenyl diphosphate. The active-site Proton donor is Glu-138. Thr-177 serves as a coordination point for (2E)-4-hydroxy-3-methylbut-2-enyl diphosphate. Cys-207 is a binding site for [4Fe-4S] cluster. (2E)-4-hydroxy-3-methylbut-2-enyl diphosphate contacts are provided by Ser-235, Ser-236, Asn-237, and Ser-280. The dimethylallyl diphosphate site is built by Ser-235, Ser-236, Asn-237, and Ser-280. Ser-235, Ser-236, Asn-237, and Ser-280 together coordinate isopentenyl diphosphate.

This sequence belongs to the IspH family. [4Fe-4S] cluster is required as a cofactor.

It carries out the reaction isopentenyl diphosphate + 2 oxidized [2Fe-2S]-[ferredoxin] + H2O = (2E)-4-hydroxy-3-methylbut-2-enyl diphosphate + 2 reduced [2Fe-2S]-[ferredoxin] + 2 H(+). The enzyme catalyses dimethylallyl diphosphate + 2 oxidized [2Fe-2S]-[ferredoxin] + H2O = (2E)-4-hydroxy-3-methylbut-2-enyl diphosphate + 2 reduced [2Fe-2S]-[ferredoxin] + 2 H(+). It functions in the pathway isoprenoid biosynthesis; dimethylallyl diphosphate biosynthesis; dimethylallyl diphosphate from (2E)-4-hydroxy-3-methylbutenyl diphosphate: step 1/1. It participates in isoprenoid biosynthesis; isopentenyl diphosphate biosynthesis via DXP pathway; isopentenyl diphosphate from 1-deoxy-D-xylulose 5-phosphate: step 6/6. Catalyzes the conversion of 1-hydroxy-2-methyl-2-(E)-butenyl 4-diphosphate (HMBPP) into a mixture of isopentenyl diphosphate (IPP) and dimethylallyl diphosphate (DMAPP). Acts in the terminal step of the DOXP/MEP pathway for isoprenoid precursor biosynthesis. This chain is 4-hydroxy-3-methylbut-2-enyl diphosphate reductase, found in Agrobacterium fabrum (strain C58 / ATCC 33970) (Agrobacterium tumefaciens (strain C58)).